The following is a 63-amino-acid chain: Large ribosomal subunit protein bL28 (63 aa).

The protein belongs to the bacterial ribosomal protein bL28 family.

In Geotalea uraniireducens (strain Rf4) (Geobacter uraniireducens), this protein is Large ribosomal subunit protein bL28.